Here is a 301-residue protein sequence, read N- to C-terminus: HTH-type transcriptional regulator MtrA (301 aa).

The 102-residue stretch at 196-297 (KRLGHLIQKV…HVSPGQYRKE (102 aa)) folds into the HTH araC/xylS-type domain. DNA-binding regions (H-T-H motif) lie at residues 216-237 (DKMV…KSQV) and 264-287 (VLEV…KRQY).

With respect to regulation, the affinity for the mtrCDE promoter increases 2-fold in the presence of TX-100, a known effector and substrate of the MtrCDE pump. In terms of biological role, involved in the induction of the mtrCDE-encoded efflux pump. Binds specifically to the mtrCDE promoter region. Required for high-level inducible resistance to the detergent Triton X-100 (TX-100) and the spermicide nonoxynol-9 (N-9). The protein is HTH-type transcriptional regulator MtrA of Neisseria gonorrhoeae.